The chain runs to 82 residues: ATP synthase subunit c, chloroplastic (82 aa).

The next 2 membrane-spanning stretches (helical) occupy residues 3–23 (PLIA…ASIG) and 57–77 (LAFM…LLFA).

The protein belongs to the ATPase C chain family. As to quaternary structure, F-type ATPases have 2 components, F(1) - the catalytic core - and F(0) - the membrane proton channel. F(1) has five subunits: alpha(3), beta(3), gamma(1), delta(1), epsilon(1). F(0) has four main subunits: a(1), b(1), b'(1) and c(10-14). The alpha and beta chains form an alternating ring which encloses part of the gamma chain. F(1) is attached to F(0) by a central stalk formed by the gamma and epsilon chains, while a peripheral stalk is formed by the delta, b and b' chains.

It is found in the plastid. It localises to the chloroplast thylakoid membrane. F(1)F(0) ATP synthase produces ATP from ADP in the presence of a proton or sodium gradient. F-type ATPases consist of two structural domains, F(1) containing the extramembraneous catalytic core and F(0) containing the membrane proton channel, linked together by a central stalk and a peripheral stalk. During catalysis, ATP synthesis in the catalytic domain of F(1) is coupled via a rotary mechanism of the central stalk subunits to proton translocation. Functionally, key component of the F(0) channel; it plays a direct role in translocation across the membrane. A homomeric c-ring of between 10-14 subunits forms the central stalk rotor element with the F(1) delta and epsilon subunits. The protein is ATP synthase subunit c, chloroplastic of Nephroselmis olivacea (Green alga).